The sequence spans 344 residues: N-acetyl-gamma-glutamyl-phosphate reductase (344 aa).

C150 is an active-site residue.

It belongs to the NAGSA dehydrogenase family. Type 1 subfamily.

The protein localises to the cytoplasm. The enzyme catalyses N-acetyl-L-glutamate 5-semialdehyde + phosphate + NADP(+) = N-acetyl-L-glutamyl 5-phosphate + NADPH + H(+). It functions in the pathway amino-acid biosynthesis; L-arginine biosynthesis; N(2)-acetyl-L-ornithine from L-glutamate: step 3/4. Its function is as follows. Catalyzes the NADPH-dependent reduction of N-acetyl-5-glutamyl phosphate to yield N-acetyl-L-glutamate 5-semialdehyde. This chain is N-acetyl-gamma-glutamyl-phosphate reductase, found in Azotobacter vinelandii (strain DJ / ATCC BAA-1303).